The primary structure comprises 173 residues: SKP1-like protein 1 (173 aa).

The interaction with the F-box domain of F-box proteins stretch occupies residues 115-173 (ILAANYLNIKGLLDLTCQTVADMIKGKTPEEIRKTFNIKNDFTPEEEEEIRRENQWAFE).

The protein belongs to the SKP1 family. Part of a SCF (SKP1-CUL1-F-box protein) E3 ubiquitin-protein ligase complex. Interacts directly with MOF (via F-box domain). Interacts with rice black streaked dwarf virus RBSDV protein P7-2. Is able to form the SCF complex together with CUL1 and the viral P7-2 protein. Interacts with D3.

It is found in the nucleus. Its pathway is protein modification; protein ubiquitination. Its function is as follows. Involved in ubiquitination and subsequent proteasomal degradation of target proteins. Together with CUL1, a RING-box and a F-box protein, it forms a SCF E3 ubiquitin ligase complex. The functional specificity of this complex depends on the type of F-box protein. In the SCF complex, it serves as an adapter that links the F-box protein to CUL1. This chain is SKP1-like protein 1, found in Oryza sativa subsp. japonica (Rice).